Reading from the N-terminus, the 282-residue chain is Pantothenate synthetase (282 aa).

30–37 (MGNLHEGH) lines the ATP pocket. The active-site Proton donor is histidine 37. Glutamine 61 is a (R)-pantoate binding site. Glutamine 61 is a binding site for beta-alanine. Residue 149 to 152 (GEKD) coordinates ATP. Residue glutamine 155 coordinates (R)-pantoate. Residues valine 178 and 186 to 189 (KSSR) each bind ATP.

Belongs to the pantothenate synthetase family. As to quaternary structure, homodimer.

It is found in the cytoplasm. It carries out the reaction (R)-pantoate + beta-alanine + ATP = (R)-pantothenate + AMP + diphosphate + H(+). It functions in the pathway cofactor biosynthesis; (R)-pantothenate biosynthesis; (R)-pantothenate from (R)-pantoate and beta-alanine: step 1/1. Functionally, catalyzes the condensation of pantoate with beta-alanine in an ATP-dependent reaction via a pantoyl-adenylate intermediate. This is Pantothenate synthetase from Marinobacter nauticus (strain ATCC 700491 / DSM 11845 / VT8) (Marinobacter aquaeolei).